The following is a 56-amino-acid chain: Cytochrome b-c1 complex subunit 10 (56 aa).

At 1–12 (MVTRFLGPRYRE) the chain is on the mitochondrial matrix side. Residues 13-35 (LVKNWVPTAYTWGAVGAVGLVWA) form a helical membrane-spanning segment. Residues 36–56 (TDWRLILDWVPYINGKFKKDN) are Mitochondrial intermembrane-facing.

Belongs to the UQCR11/QCR10 family. Component of the ubiquinol-cytochrome c oxidoreductase (cytochrome b-c1 complex, complex III, CIII), a multisubunit enzyme composed of 11 subunits. The complex is composed of 3 respiratory subunits cytochrome b, cytochrome c1 and Rieske protein UQCRFS1, 2 core protein subunits UQCRC1/QCR1 and UQCRC2/QCR2, and 6 low-molecular weight protein subunits UQCRH/QCR6, UQCRB/QCR7, UQCRQ/QCR8, UQCR10/QCR9, UQCR11/QCR10 and subunit 9, the cleavage product of Rieske protein UQCRFS1. The complex exists as an obligatory dimer and forms supercomplexes (SCs) in the inner mitochondrial membrane with NADH-ubiquinone oxidoreductase (complex I, CI) and cytochrome c oxidase (complex IV, CIV), resulting in different assemblies (supercomplex SCI(1)III(2)IV(1) and megacomplex MCI(2)III(2)IV(2)).

It localises to the mitochondrion inner membrane. In terms of biological role, component of the ubiquinol-cytochrome c oxidoreductase, a multisubunit transmembrane complex that is part of the mitochondrial electron transport chain which drives oxidative phosphorylation. The respiratory chain contains 3 multisubunit complexes succinate dehydrogenase (complex II, CII), ubiquinol-cytochrome c oxidoreductase (cytochrome b-c1 complex, complex III, CIII) and cytochrome c oxidase (complex IV, CIV), that cooperate to transfer electrons derived from NADH and succinate to molecular oxygen, creating an electrochemical gradient over the inner membrane that drives transmembrane transport and the ATP synthase. The cytochrome b-c1 complex catalyzes electron transfer from ubiquinol to cytochrome c, linking this redox reaction to translocation of protons across the mitochondrial inner membrane, with protons being carried across the membrane as hydrogens on the quinol. In the process called Q cycle, 2 protons are consumed from the matrix, 4 protons are released into the intermembrane space and 2 electrons are passed to cytochrome c. QCR10 has a role in CIII assembly and RIP1 stability. In Homo sapiens (Human), this protein is Cytochrome b-c1 complex subunit 10 (UQCR11).